Here is a 752-residue protein sequence, read N- to C-terminus: Ribosomal RNA large subunit methyltransferase K/L (752 aa).

The THUMP domain occupies 53 to 164 (QMYKICLWTR…RDELHISIDL (112 aa)).

It belongs to the methyltransferase superfamily. RlmKL family.

It is found in the cytoplasm. It catalyses the reaction guanosine(2445) in 23S rRNA + S-adenosyl-L-methionine = N(2)-methylguanosine(2445) in 23S rRNA + S-adenosyl-L-homocysteine + H(+). The enzyme catalyses guanosine(2069) in 23S rRNA + S-adenosyl-L-methionine = N(2)-methylguanosine(2069) in 23S rRNA + S-adenosyl-L-homocysteine + H(+). Specifically methylates the guanine in position 2445 (m2G2445) and the guanine in position 2069 (m7G2069) of 23S rRNA. The sequence is that of Ribosomal RNA large subunit methyltransferase K/L from Saccharophagus degradans (strain 2-40 / ATCC 43961 / DSM 17024).